Here is a 498-residue protein sequence, read N- to C-terminus: Galactose-1-phosphate uridylyltransferase (498 aa).

Belongs to the galactose-1-phosphate uridylyltransferase type 2 family.

The protein resides in the cytoplasm. It carries out the reaction alpha-D-galactose 1-phosphate + UDP-alpha-D-glucose = alpha-D-glucose 1-phosphate + UDP-alpha-D-galactose. Its pathway is carbohydrate metabolism; galactose metabolism. This Clostridium perfringens (strain SM101 / Type A) protein is Galactose-1-phosphate uridylyltransferase.